The following is a 337-amino-acid chain: 6-phosphogluconolactonase (337 aa).

It belongs to the cycloisomerase 2 family.

The catalysed reaction is 6-phospho-D-glucono-1,5-lactone + H2O = 6-phospho-D-gluconate + H(+). It functions in the pathway carbohydrate degradation; pentose phosphate pathway; D-ribulose 5-phosphate from D-glucose 6-phosphate (oxidative stage): step 2/3. Catalyzes the hydrolysis of 6-phosphogluconolactone to 6-phosphogluconate. The polypeptide is 6-phosphogluconolactonase (Blochmanniella pennsylvanica (strain BPEN)).